The primary structure comprises 472 residues: MNTFPKLNTIRNELKSVLDSDVIPLELTSLNRNRSIAKNPFLFEVTLNNTGQKNNGIEAFDPVTNQLPINLGSINSLNTGQILLEWTGLDINVTGTISSINDNEIIITFTSAFNNQYNYYRGLISVFSTGTWAHIIEYVFLGNNLGLFRFENLPSTLPTIGSSVTITFNGLLTSSGSNIFSVFIPKTMEHNALSGLLLYNETLNENKMISTYSSQRAEALISSGPVPTWTNAHTYSVRKEVPFVSSVSAAPPPTSTTVSLTPIPVGTGSPGDFIRNRSTGEIVTIVTIDNTTGAVTFSPSVNPVWVAGQTLEILTFNRDNFNYVTYSSLQREAPTGEYEATLISLNLPKERLDIDFPIEKMPFVYLEVRDTFNPSTNSFMSNNPGSKKALFKATLKSNKTDDKPFVKFSGDRAIRTLKFRPSAANFIFSILGPNGNPLMLWRQDTSSPYPPNRLLQTEAFLNIRKVSNSKYA.

It belongs to the IIV-6 198R family.

This is an uncharacterized protein from Acheta domesticus (House cricket).